The sequence spans 142 residues: Hemoglobin subunit alpha (142 aa).

In terms of domain architecture, Globin spans 2 to 142; it reads VLSPDDKKHV…VSTVLTSKYR (141 aa). Position 4 is a phosphoserine (Ser4). N6-succinyllysine is present on residues Lys8 and Lys12. At Lys17 the chain carries N6-acetyllysine; alternate. Residue Lys17 is modified to N6-succinyllysine; alternate. At Tyr25 the chain carries Phosphotyrosine. Ser36 bears the Phosphoserine mark. Lys41 carries the post-translational modification N6-succinyllysine. Ser50 is subject to Phosphoserine. His59 contacts O2. His88 serves as a coordination point for heme b. The residue at position 103 (Ser103) is a Phosphoserine. Residue Thr109 is modified to Phosphothreonine. Phosphoserine occurs at positions 125 and 132. Phosphothreonine occurs at positions 135 and 138. Residue Ser139 is modified to Phosphoserine.

The protein belongs to the globin family. In terms of assembly, heterotetramer of two alpha chains and two beta chains. As to expression, red blood cells.

Involved in oxygen transport from the lung to the various peripheral tissues. In terms of biological role, hemopressin acts as an antagonist peptide of the cannabinoid receptor CNR1. Hemopressin-binding efficiently blocks cannabinoid receptor CNR1 and subsequent signaling. The polypeptide is Hemoglobin subunit alpha (HBA) (Papio anubis (Olive baboon)).